Consider the following 431-residue polypeptide: Na(+)-translocating NADH-quinone reductase subunit F (431 aa).

The chain crosses the membrane as a helical span at residues 10–30 (IFVASAAFCSLGLILVAVILL). In terms of domain architecture, 2Fe-2S ferredoxin-type spans 41–133 (CKLKINNDDS…DLCLEVEERY (93 aa)). Residues C76, C82, C85, and C117 each coordinate [2Fe-2S] cluster. Residues 136-286 (ASSWEGTVVS…SGPYGESFMK (151 aa)) form the FAD-binding FR-type domain. Positions 289–413 (NRPVIFLIGG…ALHNSSILTL (125 aa)) are catalytic.

This sequence belongs to the NqrF family. Composed of six subunits; NqrA, NqrB, NqrC, NqrD, NqrE and NqrF. The cofactor is [2Fe-2S] cluster. FAD is required as a cofactor.

It localises to the cell inner membrane. It catalyses the reaction a ubiquinone + n Na(+)(in) + NADH + H(+) = a ubiquinol + n Na(+)(out) + NAD(+). Its function is as follows. NQR complex catalyzes the reduction of ubiquinone-1 to ubiquinol by two successive reactions, coupled with the transport of Na(+) ions from the cytoplasm to the periplasm. The first step is catalyzed by NqrF, which accepts electrons from NADH and reduces ubiquinone-1 to ubisemiquinone by a one-electron transfer pathway. The protein is Na(+)-translocating NADH-quinone reductase subunit F of Chlamydia trachomatis serovar D (strain ATCC VR-885 / DSM 19411 / UW-3/Cx).